The chain runs to 252 residues: MLREVTISRAIIESYYRDLLNNLELDVAIVGAGPSGMVAAYYLAKGGAKVAIFEKKLSIGGGIWGGGMGFNKVVVQEEAREILDEFDIRYEEFEKGYYVADAIEVATTIASKTVKAGVKIFNMIEVEDLVVKDNRVSGIVINWTPVLMTGLHVDPLTVEAKYVIDSTGHGAQVAQFLLKRGLIERIPGEGAMWAEQGERLTVENTREVFPGLYVTGMAANAIAGAPRMGPIFGGMFLSGKKAAQEILEKLNL.

NAD(+)-binding positions include Ser35, 54–55 (EK), Gly62, Val126, and 152–154 (HVD). Fe cation contacts are provided by Asp154 and His169. Met217 provides a ligand contact to NAD(+). Position 227 (Arg227) interacts with glycine.

The protein belongs to the THI4 family. As to quaternary structure, homooctamer; tetramer of dimers. It depends on Fe(2+) as a cofactor.

It carries out the reaction hydrogen sulfide + glycine + NAD(+) = ADP-5-ethyl-4-methylthiazole-2-carboxylate + nicotinamide + 3 H2O + H(+). The protein operates within cofactor biosynthesis; thiamine diphosphate biosynthesis. Functionally, involved in the biosynthesis of the thiazole moiety of thiamine. Catalyzes the conversion of NAD and glycine to adenosine diphosphate 5-(2-hydroxyethyl)-4-methylthiazole-2-carboxylate (ADT), an adenylated thiazole intermediate, using free sulfide as a source of sulfur. The sequence is that of Thiamine thiazole synthase from Pyrococcus abyssi (strain GE5 / Orsay).